A 106-amino-acid chain; its full sequence is Large ribosomal subunit protein P1 (106 aa).

The span at 66 to 76 shows a compositional bias: low complexity; that stretch reads AQPQATQAQPA. The tract at residues 66-106 is disordered; the sequence is AQPQATQAQPAAEEKKEEKKEEEKKGPSEEEIASGLASLFG. A compositionally biased stretch (basic and acidic residues) spans 77–93; it reads AEEKKEEKKEEEKKGPS.

The protein belongs to the eukaryotic ribosomal protein P1/P2 family. As to quaternary structure, part of the 50S ribosomal subunit. Homodimer, it forms part of the ribosomal stalk which helps the ribosome interact with GTP-bound translation factors. Forms a heptameric uL10/P0(P1)2(P1)2(P1)2 complex, where uL10/P0 forms an elongated spine to which the P1 dimers bind in a sequential fashion.

Forms part of the ribosomal stalk, playing a central role in the interaction of the ribosome with GTP-bound translation factors. The sequence is that of Large ribosomal subunit protein P1 from Saccharolobus solfataricus (strain ATCC 35092 / DSM 1617 / JCM 11322 / P2) (Sulfolobus solfataricus).